Reading from the N-terminus, the 337-residue chain is Phosphate acyltransferase (337 aa).

It belongs to the PlsX family. As to quaternary structure, homodimer. Probably interacts with PlsY.

Its subcellular location is the cytoplasm. It carries out the reaction a fatty acyl-[ACP] + phosphate = an acyl phosphate + holo-[ACP]. It functions in the pathway lipid metabolism; phospholipid metabolism. Catalyzes the reversible formation of acyl-phosphate (acyl-PO(4)) from acyl-[acyl-carrier-protein] (acyl-ACP). This enzyme utilizes acyl-ACP as fatty acyl donor, but not acyl-CoA. In Listeria monocytogenes serotype 4b (strain F2365), this protein is Phosphate acyltransferase.